The primary structure comprises 511 residues: MKEKFAALIIMDGLGIAPASDSNSVTLADTTYLDNLLKEYPNSTLVTSGEAVGLPEGQMGNSEVGHLNLGAGRIVWQSLSRINVAIKDGSFFKNQAFLDAVAHAKKHNSKLHIMGLVSDGGVHAQMGHYLALYDFAKQQNILDRTYLHVFTDGRDTPQESGYGFVKTLVDYGFNVATVSGRFYAMDRDNNWDRVQLAFDAMTLGDGPHFNSALDGIESSYKSGIQDEFIKPFIVNDKGLIENDDAVIFANFRPDRAIRIATALSNPSAAKTIYTEGKPMLNVSKAPKNIFLVSMMHYKETVKGPLAFELQTFDDLYGEVIEKNGFKQIRAAETEKYPHVTFFFDGGKEVPLANSTRILAESPKVPTYDLKPEMSAYELTDKVIAALKTGEYQTMILNFANPDMVGHTGNIEATKKAVEVTVECVGKVTDFIINELGGVAIILADHGNAEQMRDQEGKPHTAHTTNLVPVVVTKKGIKLNSGALCDVAPTLLDLLGIEKPKAMTGTSLIEKI.

D12 and S62 together coordinate Mn(2+). The active-site Phosphoserine intermediate is S62. Residues H123, 154–155 (RD), R181, R187, 252–255 (RPDR), and K335 each bind substrate. D402, H406, D444, H445, and H462 together coordinate Mn(2+).

Belongs to the BPG-independent phosphoglycerate mutase family. Monomer. Mn(2+) serves as cofactor.

The enzyme catalyses (2R)-2-phosphoglycerate = (2R)-3-phosphoglycerate. The protein operates within carbohydrate degradation; glycolysis; pyruvate from D-glyceraldehyde 3-phosphate: step 3/5. Functionally, catalyzes the interconversion of 2-phosphoglycerate and 3-phosphoglycerate. This chain is 2,3-bisphosphoglycerate-independent phosphoglycerate mutase, found in Acholeplasma laidlawii (strain PG-8A).